The chain runs to 111 residues: Large ribosomal subunit protein uL22 (111 aa).

Belongs to the universal ribosomal protein uL22 family. As to quaternary structure, part of the 50S ribosomal subunit.

This protein binds specifically to 23S rRNA; its binding is stimulated by other ribosomal proteins, e.g. L4, L17, and L20. It is important during the early stages of 50S assembly. It makes multiple contacts with different domains of the 23S rRNA in the assembled 50S subunit and ribosome. Its function is as follows. The globular domain of the protein is located near the polypeptide exit tunnel on the outside of the subunit, while an extended beta-hairpin is found that lines the wall of the exit tunnel in the center of the 70S ribosome. This chain is Large ribosomal subunit protein uL22, found in Acholeplasma laidlawii.